The primary structure comprises 240 residues: Uridylate kinase (240 aa).

ATP is bound at residue 13-16 (KLSG). The involved in allosteric activation by GTP stretch occupies residues 21 to 26 (GEKGFG). G55 serves as a coordination point for UMP. Residues G56 and R60 each coordinate ATP. Residues D75 and 136–143 (IGNPYFST) contribute to the UMP site. The ATP site is built by N164, Y170, and D173.

It belongs to the UMP kinase family. Homohexamer.

The protein localises to the cytoplasm. It carries out the reaction UMP + ATP = UDP + ADP. It functions in the pathway pyrimidine metabolism; CTP biosynthesis via de novo pathway; UDP from UMP (UMPK route): step 1/1. With respect to regulation, allosterically activated by GTP. Inhibited by UTP. Functionally, catalyzes the reversible phosphorylation of UMP to UDP. The sequence is that of Uridylate kinase from Staphylococcus aureus (strain USA300).